A 153-amino-acid polypeptide reads, in one-letter code: MAL-like protein (153 aa).

4 helical membrane passes run 22 to 42 (LFLT…FLVW), 59 to 79 (VMYV…SYLF), 97 to 117 (GTTG…TIVS), and 131 to 151 (AASF…FSIY). One can recognise an MARVEL domain in the interval 22–153 (LFLTIPFAFF…ILHAFSIYYH (132 aa)).

Belongs to the MAL family.

It is found in the membrane. This chain is MAL-like protein (MALL), found in Homo sapiens (Human).